We begin with the raw amino-acid sequence, 1252 residues long: Guanine nucleotide exchange factor SDC25 (1252 aa).

Residues 26 to 97 form the SH3 domain; it reads QPIDVVECTY…PPSFTRSILN (72 aa). Disordered stretches follow at residues 409 to 454 and 623 to 648; these read IPAS…DTIW and LNLD…DEYE. Over residues 416–428 the composition is skewed to low complexity; it reads TSCSSETSHHSPS. In terms of domain architecture, N-terminal Ras-GEF spans 782-914; that stretch reads SNNRIKGGSK…LLKEVNQKFK (133 aa). Residues 952–1199 enclose the Ras-GEF domain; sequence DPVLFATQLT…YQLSLIIEPK (248 aa). The interval 1201-1252 is disordered; that stretch reads RKKVVPNSNSNNKSQEKSRDDQTDEGKTSTKKDRFSKFQLHKTKKKAPKVSK. The span at 1214-1236 shows a compositional bias: basic and acidic residues; that stretch reads SQEKSRDDQTDEGKTSTKKDRFS. Residues 1239–1252 are compositionally biased toward basic residues; it reads QLHKTKKKAPKVSK.

Functionally, promotes the exchange of Ras-bound GDP by GTP. The sequence is that of Guanine nucleotide exchange factor SDC25 (SDC25) from Saccharomyces cerevisiae (strain YJM789) (Baker's yeast).